The following is a 648-amino-acid chain: Probable alpha-galactosidase D (648 aa).

Residues 1 to 16 form the signal peptide; sequence MEFIVSLLLLSPALVA. N-linked (GlcNAc...) asparagine glycans are attached at residues asparagine 84 and asparagine 90. A disulfide bridge connects residues cysteine 123 and cysteine 156. Aspartate 154 functions as the Nucleophile in the catalytic mechanism. 199–203 is a binding site for substrate; the sequence is EWGID. Aspartate 221 (proton donor) is an active-site residue. Asparagine 339, asparagine 350, asparagine 505, and asparagine 572 each carry an N-linked (GlcNAc...) asparagine glycan.

This sequence belongs to the glycosyl hydrolase 27 family.

The protein localises to the secreted. The enzyme catalyses Hydrolysis of terminal, non-reducing alpha-D-galactose residues in alpha-D-galactosides, including galactose oligosaccharides, galactomannans and galactolipids.. Its function is as follows. Hydrolyzes a variety of simple alpha-D-galactoside as well as more complex molecules such as oligosaccharides and polysaccharides. This chain is Probable alpha-galactosidase D (aglD), found in Aspergillus fumigatus (strain CBS 144.89 / FGSC A1163 / CEA10) (Neosartorya fumigata).